We begin with the raw amino-acid sequence, 299 residues long: tRNA dimethylallyltransferase (299 aa).

11-18 (GPTGSGKS) serves as a coordination point for ATP. 13–18 (TGSGKS) contributes to the substrate binding site.

The protein belongs to the IPP transferase family. As to quaternary structure, monomer. It depends on Mg(2+) as a cofactor.

The enzyme catalyses adenosine(37) in tRNA + dimethylallyl diphosphate = N(6)-dimethylallyladenosine(37) in tRNA + diphosphate. Functionally, catalyzes the transfer of a dimethylallyl group onto the adenine at position 37 in tRNAs that read codons beginning with uridine, leading to the formation of N6-(dimethylallyl)adenosine (i(6)A). This Pseudarthrobacter chlorophenolicus (strain ATCC 700700 / DSM 12829 / CIP 107037 / JCM 12360 / KCTC 9906 / NCIMB 13794 / A6) (Arthrobacter chlorophenolicus) protein is tRNA dimethylallyltransferase.